Consider the following 211-residue polypeptide: Envelope protein UL45 homolog (211 aa).

Over Met-1–Thr-46 the chain is Intravirion. A helical; Signal-anchor for type II membrane protein transmembrane segment spans residues Ile-47 to Ala-67. The Virion surface portion of the chain corresponds to Phe-68 to Lys-211. 2 N-linked (GlcNAc...) asparagine; by host glycosylation sites follow: Asn-96 and Asn-133.

Belongs to the herpesviridae HHV-1 UL45 family.

The protein localises to the virion membrane. The chain is Envelope protein UL45 homolog (UL45H) from Gallid herpesvirus 2 (strain Chicken/Md5/ATCC VR-987) (GaHV-2).